The following is a 278-amino-acid chain: MFFGILKAIILGIVEGITEFLPISSTGHLIIVDQFVKISSNKAFTTTFEYVIQLGAIIAVVLLYWKRLWPFGGGKTEKQRFNIWATWVKVVVGVIPSVIIGFLLNDWMDKHLMNWLVVSIALIVYGIAFIFIENYQKNRRPRVRTINHLTLADVLKIGFFQVLSIVPGTSRSGATILGGISIGVSREAAAEFSFFLSIPTMLGVSVLKIGSYLHSHGMFSGEQIVILLVGMFVSFVVAYVVIKWLLRFIQTHDFKAFGWYRIILGVLVIALGAIGIID.

7 helical membrane passes run Met1–Leu21, Ala43–Leu63, Ile83–Leu103, Leu112–Ile132, Phe192–Tyr212, Ile224–Trp244, and Phe257–Ile277.

The protein belongs to the UppP family.

It localises to the cell membrane. It catalyses the reaction di-trans,octa-cis-undecaprenyl diphosphate + H2O = di-trans,octa-cis-undecaprenyl phosphate + phosphate + H(+). Catalyzes the dephosphorylation of undecaprenyl diphosphate (UPP). Confers resistance to bacitracin. This is Undecaprenyl-diphosphatase 1 from Oenococcus oeni (strain ATCC BAA-331 / PSU-1).